The following is a 932-amino-acid chain: von Willebrand factor A domain-containing protein DDB_G0292028 (932 aa).

The interval 1-49 (MNFIKKVIGGGSSKSKTDIKIEDEQHEQQHEQQHEKQQIPDKISTSKVN) is disordered. The span at 15 to 39 (SKTDIKIEDEQHEQQHEQQHEKQQI) shows a compositional bias: basic and acidic residues. The VIT domain maps to 95-222 (LTSPGLNTKV…DVTVNITITS (128 aa)). The VWFA domain maps to 342-521 (EFIFVLDCSG…IAMQPTLSNI (180 aa)). 2 disordered regions span residues 661-752 (QQIN…SQAQ) and 800-834 (TSQISQSSRECRSKKSSSPTIQKSSSLPSRPSTSS). The segment covering 677–686 (TRVQGSSSVF) has biased composition (polar residues). A compositionally biased stretch (low complexity) spans 815–834 (SSSPTIQKSSSLPSRPSTSS).

The polypeptide is von Willebrand factor A domain-containing protein DDB_G0292028 (Dictyostelium discoideum (Social amoeba)).